The following is a 728-amino-acid chain: 1,4-alpha-glucan branching enzyme GlgB (728 aa).

Asp-405 acts as the Nucleophile in catalysis. The Proton donor role is filled by Glu-458.

It belongs to the glycosyl hydrolase 13 family. GlgB subfamily. As to quaternary structure, monomer.

The enzyme catalyses Transfers a segment of a (1-&gt;4)-alpha-D-glucan chain to a primary hydroxy group in a similar glucan chain.. The protein operates within glycan biosynthesis; glycogen biosynthesis. In terms of biological role, catalyzes the formation of the alpha-1,6-glucosidic linkages in glycogen by scission of a 1,4-alpha-linked oligosaccharide from growing alpha-1,4-glucan chains and the subsequent attachment of the oligosaccharide to the alpha-1,6 position. The polypeptide is 1,4-alpha-glucan branching enzyme GlgB (Serratia proteamaculans (strain 568)).